We begin with the raw amino-acid sequence, 170 residues long: ATP synthase subunit b (170 aa).

The helical transmembrane segment at 11-31 (AFTFGDAFFTLFAFAILLVLI) threads the bilayer.

Belongs to the ATPase B chain family. In terms of assembly, F-type ATPases have 2 components, F(1) - the catalytic core - and F(0) - the membrane proton channel. F(1) has five subunits: alpha(3), beta(3), gamma(1), delta(1), epsilon(1). F(0) has three main subunits: a(1), b(2) and c(10-14). The alpha and beta chains form an alternating ring which encloses part of the gamma chain. F(1) is attached to F(0) by a central stalk formed by the gamma and epsilon chains, while a peripheral stalk is formed by the delta and b chains.

The protein resides in the cell membrane. F(1)F(0) ATP synthase produces ATP from ADP in the presence of a proton or sodium gradient. F-type ATPases consist of two structural domains, F(1) containing the extramembraneous catalytic core and F(0) containing the membrane proton channel, linked together by a central stalk and a peripheral stalk. During catalysis, ATP synthesis in the catalytic domain of F(1) is coupled via a rotary mechanism of the central stalk subunits to proton translocation. In terms of biological role, component of the F(0) channel, it forms part of the peripheral stalk, linking F(1) to F(0). The chain is ATP synthase subunit b from Listeria monocytogenes serotype 4b (strain F2365).